A 399-amino-acid chain; its full sequence is 4-hydroxy-3-methylbut-2-enyl diphosphate reductase (399 aa).

Cysteine 66 is a binding site for [4Fe-4S] cluster. Histidine 96 contributes to the (2E)-4-hydroxy-3-methylbut-2-enyl diphosphate binding site. Dimethylallyl diphosphate is bound at residue histidine 96. Residue histidine 96 participates in isopentenyl diphosphate binding. Cysteine 157 is a binding site for [4Fe-4S] cluster. Residue histidine 185 participates in (2E)-4-hydroxy-3-methylbut-2-enyl diphosphate binding. Histidine 185 is a binding site for dimethylallyl diphosphate. Histidine 185 provides a ligand contact to isopentenyl diphosphate. The Proton donor role is filled by glutamate 187. Position 250 (threonine 250) interacts with (2E)-4-hydroxy-3-methylbut-2-enyl diphosphate. Cysteine 288 contacts [4Fe-4S] cluster. The (2E)-4-hydroxy-3-methylbut-2-enyl diphosphate site is built by serine 317, serine 318, asparagine 319, and serine 380. Residues serine 317, serine 318, asparagine 319, and serine 380 each coordinate dimethylallyl diphosphate. Serine 317, serine 318, asparagine 319, and serine 380 together coordinate isopentenyl diphosphate.

It belongs to the IspH family. Requires [4Fe-4S] cluster as cofactor.

It catalyses the reaction isopentenyl diphosphate + 2 oxidized [2Fe-2S]-[ferredoxin] + H2O = (2E)-4-hydroxy-3-methylbut-2-enyl diphosphate + 2 reduced [2Fe-2S]-[ferredoxin] + 2 H(+). It carries out the reaction dimethylallyl diphosphate + 2 oxidized [2Fe-2S]-[ferredoxin] + H2O = (2E)-4-hydroxy-3-methylbut-2-enyl diphosphate + 2 reduced [2Fe-2S]-[ferredoxin] + 2 H(+). Its pathway is isoprenoid biosynthesis; dimethylallyl diphosphate biosynthesis; dimethylallyl diphosphate from (2E)-4-hydroxy-3-methylbutenyl diphosphate: step 1/1. It participates in isoprenoid biosynthesis; isopentenyl diphosphate biosynthesis via DXP pathway; isopentenyl diphosphate from 1-deoxy-D-xylulose 5-phosphate: step 6/6. Catalyzes the conversion of 1-hydroxy-2-methyl-2-(E)-butenyl 4-diphosphate (HMBPP) into a mixture of isopentenyl diphosphate (IPP) and dimethylallyl diphosphate (DMAPP). Acts in the terminal step of the DOXP/MEP pathway for isoprenoid precursor biosynthesis. The sequence is that of 4-hydroxy-3-methylbut-2-enyl diphosphate reductase from Synechococcus sp. (strain CC9902).